Here is a 277-residue protein sequence, read N- to C-terminus: MGLLECCARCLVGAPFASLVATGLCFFGVALFCGCGHEALTGTEKLIETYFSKNYQDYEYLINVIHAFQYVIYGTASFFFLYGALLLAEGFYTTGAVRQIFGDYKTTICGKGLSATVTGGQKGRGSRGQHQAHSLERVRHCLGKWLGHPDKFVGITYALTVVWLLVFACSAVPVYIYFNTWTTCQSIAFPSKTSASIGSLCADARMYGVLPWNAFPGKVCGSNLLSICKTAEFQMTFHLFIAAFVGAAATLISLLTFMIAATYNFAVLKLMGRGTKF.

Residues 1–10 (MGLLECCARC) lie on the Cytoplasmic side of the membrane. 3 S-palmitoyl cysteine lipidation sites follow: C6, C7, and C10. A helical transmembrane segment spans residues 11-36 (LVGAPFASLVATGLCFFGVALFCGCG). At 37-59 (HEALTGTEKLIETYFSKNYQDYE) the chain is on the extracellular side. Residues 60–88 (YLINVIHAFQYVIYGTASFFFLYGALLLA) form a helical membrane-spanning segment. The Cytoplasmic segment spans residues 89-151 (EGFYTTGAVR…LGKWLGHPDK (63 aa)). The S-palmitoyl cysteine moiety is linked to residue C109. The residue at position 114 (S114) is a Phosphoserine. A phosphothreonine mark is found at T116 and T118. C141 is lipidated: S-palmitoyl cysteine. A helical membrane pass occupies residues 152 to 178 (FVGITYALTVVWLLVFACSAVPVYIYF). At 179 to 238 (NTWTTCQSIAFPSKTSASIGSLCADARMYGVLPWNAFPGKVCGSNLLSICKTAEFQMTFH) the chain is on the extracellular side. 2 disulfides stabilise this stretch: C184–C228 and C201–C220. S199 carries O-palmitoyl serine lipidation. The chain crosses the membrane as a helical span at residues 239–268 (LFIAAFVGAAATLISLLTFMIAATYNFAVL). Over 269–277 (KLMGRGTKF) the chain is Cytoplasmic.

It belongs to the myelin proteolipid protein family.

The protein resides in the cell membrane. It localises to the myelin membrane. This is the major myelin protein from the central nervous system. It plays an important role in the formation or maintenance of the multilamellar structure of myelin. This chain is Myelin proteolipid protein (PLP1), found in Macaca fascicularis (Crab-eating macaque).